Here is a 143-residue protein sequence, read N- to C-terminus: Large ribosomal subunit protein uL11 (143 aa).

Belongs to the universal ribosomal protein uL11 family. In terms of assembly, part of the ribosomal stalk of the 50S ribosomal subunit. Interacts with L10 and the large rRNA to form the base of the stalk. L10 forms an elongated spine to which L12 dimers bind in a sequential fashion forming a multimeric L10(L12)X complex. Post-translationally, one or more lysine residues are methylated.

Forms part of the ribosomal stalk which helps the ribosome interact with GTP-bound translation factors. The protein is Large ribosomal subunit protein uL11 of Beutenbergia cavernae (strain ATCC BAA-8 / DSM 12333 / CCUG 43141 / JCM 11478 / NBRC 16432 / NCIMB 13614 / HKI 0122).